The chain runs to 160 residues: Transcription elongation factor GreA (160 aa).

Residues 12–76 are a coiled coil; sequence EGVKKLEEEL…QLENMLKNAS (65 aa).

This sequence belongs to the GreA/GreB family.

Necessary for efficient RNA polymerase transcription elongation past template-encoded arresting sites. The arresting sites in DNA have the property of trapping a certain fraction of elongating RNA polymerases that pass through, resulting in locked ternary complexes. Cleavage of the nascent transcript by cleavage factors such as GreA or GreB allows the resumption of elongation from the new 3'terminus. GreA releases sequences of 2 to 3 nucleotides. This Clostridium botulinum (strain Hall / ATCC 3502 / NCTC 13319 / Type A) protein is Transcription elongation factor GreA.